Reading from the N-terminus, the 319-residue chain is Phosphatidylglycerol--prolipoprotein diacylglyceryl transferase (319 aa).

The next 3 helical transmembrane spans lie at 21 to 41 (PIPIRAYAMCIIAGIIVAIWL), 50 to 70 (GGNPEIVLDAAIVAVPAGIIG), and 98 to 118 (NGGLGIWGAVILGGLAVAVFF). Residue arginine 144 participates in a 1,2-diacyl-sn-glycero-3-phospho-(1'-sn-glycerol) binding. The next 2 membrane-spanning stretches (helical) occupy residues 191–211 (VHPTFLYELLWNLLIFALLMW) and 254–274 (INTIVSAVVFAGAIIVFFLLK). The segment at 295–319 (AVASPDGKPLPKAGEGIDGETPSTR) is disordered.

This sequence belongs to the Lgt family.

It is found in the cell membrane. The enzyme catalyses L-cysteinyl-[prolipoprotein] + a 1,2-diacyl-sn-glycero-3-phospho-(1'-sn-glycerol) = an S-1,2-diacyl-sn-glyceryl-L-cysteinyl-[prolipoprotein] + sn-glycerol 1-phosphate + H(+). The protein operates within protein modification; lipoprotein biosynthesis (diacylglyceryl transfer). Functionally, catalyzes the transfer of the diacylglyceryl group from phosphatidylglycerol to the sulfhydryl group of the N-terminal cysteine of a prolipoprotein, the first step in the formation of mature lipoproteins. The sequence is that of Phosphatidylglycerol--prolipoprotein diacylglyceryl transferase from Corynebacterium glutamicum (strain R).